A 784-amino-acid polypeptide reads, in one-letter code: Replication protein A 70 kDa DNA-binding subunit E (784 aa).

The segment at 114 to 224 (HPVPGGKHND…NRGPVARNEA (111 aa)) is disordered. Composition is skewed to polar residues over residues 132–148 (KFNT…QVNN) and 167–190 (SSVP…NGVT). The segment at residues 241-327 (WTIKARVTNK…RNDYEIMLDN (87 aa)) is a DNA-binding region (OB). The C4-type zinc-finger motif lies at 532-558 (CPIMNGDRPCSKKVTDNGDGTWRCEKC). Disordered stretches follow at residues 678 to 707 (LPIN…PSSV) and 746 to 784 (AKCP…VGSY). The segment covering 695-707 (GIGSSGTRDPSSV) has biased composition (polar residues). The segment covering 760 to 776 (YMGGSYRGTTGSYGGGL) has biased composition (gly residues).

Belongs to the replication factor A protein 1 family. As to quaternary structure, heterotrimer of RPA1, RPA2 and RPA3 (canonical replication protein A complex).

It is found in the nucleus. Functionally, component of the replication protein A complex (RPA) required for DNA recombination, repair and replication. The activity of RPA is mediated by single-stranded DNA binding and protein interactions. Probably involved in repair of double-strand DNA breaks (DSBs) induced by genotoxic stresses. The polypeptide is Replication protein A 70 kDa DNA-binding subunit E (RPA1E) (Arabidopsis thaliana (Mouse-ear cress)).